We begin with the raw amino-acid sequence, 216 residues long: MOB kinase activator-like 2A (216 aa).

Zn(2+) is bound by residues C81, C86, H162, and H167.

Belongs to the MOB1/phocein family.

The protein resides in the nucleus. The chain is MOB kinase activator-like 2A from Arabidopsis thaliana (Mouse-ear cress).